The sequence spans 161 residues: Peroxynitrite isomerase 2 (161 aa).

The short motif at 17–23 (GTWAGQG) is the GXWXGXG element. Position 152 (His-152) interacts with heme b.

Belongs to the nitrobindin family. Homodimer. Heme b serves as cofactor.

It carries out the reaction peroxynitrite = nitrate. It participates in nitrogen metabolism. Functionally, heme-binding protein able to scavenge peroxynitrite and to protect free L-tyrosine against peroxynitrite-mediated nitration, by acting as a peroxynitrite isomerase that converts peroxynitrite to nitrate. Therefore, this protein likely plays a role in peroxynitrite sensing and in the detoxification of reactive nitrogen and oxygen species (RNS and ROS, respectively). Is able to bind nitric oxide (NO) in vitro, but may act as a sensor of peroxynitrite levels in vivo. In Mycobacterium marinum (strain ATCC BAA-535 / M), this protein is Peroxynitrite isomerase 2.